The chain runs to 951 residues: 5'-3' exoribonuclease 2 (951 aa).

Residues 262–278 (PCALCNQFGHEVKDCEG) form a CCHC-type zinc finger. The residue at position 286 (Lys-286) is an N6-acetyllysine. The interval 408-508 (KDDEDSFRRR…SDSEPEPEDN (101 aa)) is disordered. A compositionally biased stretch (basic residues) spans 416–426 (RRQKEKRKRMK). Thr-439 is modified (phosphothreonine). Composition is skewed to polar residues over residues 445-458 (SRNS…SNPR) and 467-485 (QRNS…SDGS). A phosphoserine mark is found at Ser-448, Ser-471, Ser-473, Ser-475, Ser-482, Ser-487, Ser-499, Ser-501, and Ser-678. 3 positions are modified to asymmetric dimethylarginine; alternate: Arg-824, Arg-847, and Arg-851. 3 positions are modified to omega-N-methylarginine; alternate: Arg-824, Arg-847, and Arg-851. Arg-880 is subject to Asymmetric dimethylarginine. Residue Arg-883 is modified to Asymmetric dimethylarginine; alternate. Position 883 is an omega-N-methylarginine; alternate (Arg-883). An Omega-N-methylarginine modification is found at Arg-895. Positions 907-951 (NQYQMLGGPGGYPPRRDDHRGGRQGYPREGRKYPLPPPSGRYSWN) are disordered. A compositionally biased stretch (basic and acidic residues) spans 920–938 (PRRDDHRGGRQGYPREGRK). Arg-947 is modified (asymmetric dimethylarginine; alternate). Arg-947 carries the post-translational modification Omega-N-methylarginine; alternate.

Belongs to the 5'-3' exonuclease family. XRN2/RAT1 subfamily. In terms of assembly, interacts with POLR2A and SMN1/SMN2. Interacts with CDKN2AIP and NKRF. Interacts with CDKN2AIPNL; the interaction is direct. Interacts with TRIM71 (via NHL repeats) in an RNA-dependent manner. Interacts with DHX34; the interaction is RNA-independent. As to expression, expressed in the spleen, testis, heart, brain, lung, liver, skeletal muscle, and kidney.

Its subcellular location is the nucleus. It is found in the nucleolus. Possesses 5'-&gt;3' exoribonuclease activity. May promote the termination of transcription by RNA polymerase II. During transcription termination, cleavage at the polyadenylation site liberates a 5' fragment which is subsequently processed to form the mature mRNA and a 3' fragment which remains attached to the elongating polymerase. The processive degradation of this 3' fragment by this protein may promote termination of transcription. Binds to RNA polymerase II (RNAp II) transcription termination R-loops formed by G-rich pause sites. This Mus musculus (Mouse) protein is 5'-3' exoribonuclease 2 (Xrn2).